A 330-amino-acid polypeptide reads, in one-letter code: Aspartate--ammonia ligase (330 aa).

Belongs to the class-II aminoacyl-tRNA synthetase family. AsnA subfamily.

The protein resides in the cytoplasm. It carries out the reaction L-aspartate + NH4(+) + ATP = L-asparagine + AMP + diphosphate + H(+). It participates in amino-acid biosynthesis; L-asparagine biosynthesis; L-asparagine from L-aspartate (ammonia route): step 1/1. The sequence is that of Aspartate--ammonia ligase from Actinobacillus pleuropneumoniae serotype 7 (strain AP76).